Reading from the N-terminus, the 218-residue chain is Adenylate kinase (218 aa).

ATP is bound at residue 10–15; that stretch reads GAGKGT. The interval 30-59 is NMP; it reads STGNMLRAAVKAGTPLGLEAKKVMDAGGLV. AMP is bound by residues Thr-31, Arg-36, 57 to 59, 85 to 88, and Gln-92; these read GLV and GFPR. The LID stretch occupies residues 122 to 159; that stretch reads GRRVHPASGRSYHVRFNPPKAEGVDDVTGEPLVQRDDD. ATP contacts are provided by residues Arg-123 and 132 to 133; that span reads SY. Positions 156 and 167 each coordinate AMP. Residue Gly-203 participates in ATP binding.

The protein belongs to the adenylate kinase family. In terms of assembly, monomer.

It localises to the cytoplasm. The enzyme catalyses AMP + ATP = 2 ADP. It participates in purine metabolism; AMP biosynthesis via salvage pathway; AMP from ADP: step 1/1. In terms of biological role, catalyzes the reversible transfer of the terminal phosphate group between ATP and AMP. Plays an important role in cellular energy homeostasis and in adenine nucleotide metabolism. This chain is Adenylate kinase, found in Bordetella parapertussis (strain 12822 / ATCC BAA-587 / NCTC 13253).